Reading from the N-terminus, the 396-residue chain is Ribose-phosphate pyrophosphokinase 1, chloroplastic (396 aa).

Residues 1-36 constitute a chloroplast transit peptide; sequence MPLSYSAAAAAAPSPLAARSRGLLRRPPRSSPVVVR. Residues D204, H206, D215, and D219 each coordinate Mg(2+). Residues 290 to 305 are binding of phosphoribosylpyrophosphate; it reads GKVAVMMDDMIDTAGT.

Belongs to the ribose-phosphate pyrophosphokinase family. Mg(2+) serves as cofactor.

Its subcellular location is the plastid. The protein resides in the chloroplast. The enzyme catalyses D-ribose 5-phosphate + ATP = 5-phospho-alpha-D-ribose 1-diphosphate + AMP + H(+). The sequence is that of Ribose-phosphate pyrophosphokinase 1, chloroplastic from Oryza sativa subsp. japonica (Rice).